The sequence spans 96 residues: Neurotoxin 23 (96 aa).

The N-terminal stretch at 1–22 (MKNIVIIITVAVLFNLFGESLQ) is a signal peptide. One can recognise an LCN-type CS-alpha/beta domain in the interval 26–89 (FETYPLNQDD…FLAEIIDTCN (64 aa)). Cystine bridges form between Cys40–Cys63, Cys49–Cys68, and Cys53–Cys70.

This sequence belongs to the long (3 C-C) scorpion toxin superfamily. Expressed by the venom gland.

The protein localises to the secreted. This chain is Neurotoxin 23, found in Lychas mucronatus (Chinese swimming scorpion).